Here is an 859-residue protein sequence, read N- to C-terminus: DNA mismatch repair protein MutS (859 aa).

Residue 622-629 coordinates ATP; that stretch reads GPNMGGKS.

It belongs to the DNA mismatch repair MutS family.

Its function is as follows. This protein is involved in the repair of mismatches in DNA. It is possible that it carries out the mismatch recognition step. This protein has a weak ATPase activity. The sequence is that of DNA mismatch repair protein MutS from Syntrophomonas wolfei subsp. wolfei (strain DSM 2245B / Goettingen).